The primary structure comprises 209 residues: MGQKVHPRGFRLGLSADWQAKWFNEKNYKEWLLEDEEIRKFIKNKYYHAGISEIYVERPDAERINITVKTARPGIIIGRKGAEITSLREELERKFNRRVVINIEEIKTPELDAQLVAESIASRIEKRASYKVAMKRAIMNAMRKGAQGIKVMVAGRLGGAEIARREWYLRGRLPLQKLKAIIDYGTATAWTKYGTIGIKVWIYKGDADI.

The KH type-2 domain maps to 38-107 (IRKFIKNKYY…RVVINIEEIK (70 aa)).

This sequence belongs to the universal ribosomal protein uS3 family. Part of the 30S ribosomal subunit. Forms a tight complex with proteins S10 and S14.

Binds the lower part of the 30S subunit head. Binds mRNA in the 70S ribosome, positioning it for translation. The protein is Small ribosomal subunit protein uS3 of Thermotoga sp. (strain RQ2).